The sequence spans 360 residues: Phospho-N-acetylmuramoyl-pentapeptide-transferase (360 aa).

Transmembrane regions (helical) follow at residues 25–45 (RGIL…PWMI), 73–93 (TMGG…WADL), 97–117 (YVWV…VDDY), 142–162 (IGAA…TLIV), 167–187 (SVEI…IVGS), 199–219 (GLAI…CYLS), 236–256 (AGEL…FLWF), 263–283 (VFMG…IAVI), 288–308 (IVLF…MIQV), and 338–358 (VIVR…ATLK).

This sequence belongs to the glycosyltransferase 4 family. MraY subfamily. Mg(2+) is required as a cofactor.

It localises to the cell inner membrane. The catalysed reaction is UDP-N-acetyl-alpha-D-muramoyl-L-alanyl-gamma-D-glutamyl-meso-2,6-diaminopimeloyl-D-alanyl-D-alanine + di-trans,octa-cis-undecaprenyl phosphate = di-trans,octa-cis-undecaprenyl diphospho-N-acetyl-alpha-D-muramoyl-L-alanyl-D-glutamyl-meso-2,6-diaminopimeloyl-D-alanyl-D-alanine + UMP. Its pathway is cell wall biogenesis; peptidoglycan biosynthesis. Functionally, catalyzes the initial step of the lipid cycle reactions in the biosynthesis of the cell wall peptidoglycan: transfers peptidoglycan precursor phospho-MurNAc-pentapeptide from UDP-MurNAc-pentapeptide onto the lipid carrier undecaprenyl phosphate, yielding undecaprenyl-pyrophosphoryl-MurNAc-pentapeptide, known as lipid I. This chain is Phospho-N-acetylmuramoyl-pentapeptide-transferase, found in Pseudomonas aeruginosa (strain LESB58).